A 206-amino-acid polypeptide reads, in one-letter code: Pyridoxine/pyridoxamine 5'-phosphate oxidase (206 aa).

Residues 54–59 (RVVLLK), 69–70 (YT), R75, K76, and Q98 each bind FMN. K59 is a binding site for substrate. Y116, R120, and S124 together coordinate substrate. FMN is bound by residues 133-134 (QS) and W178. 184–186 (RLH) is a binding site for substrate. R188 contacts FMN.

Belongs to the pyridoxamine 5'-phosphate oxidase family. As to quaternary structure, homodimer. It depends on FMN as a cofactor.

It catalyses the reaction pyridoxamine 5'-phosphate + O2 + H2O = pyridoxal 5'-phosphate + H2O2 + NH4(+). It carries out the reaction pyridoxine 5'-phosphate + O2 = pyridoxal 5'-phosphate + H2O2. It participates in cofactor metabolism; pyridoxal 5'-phosphate salvage; pyridoxal 5'-phosphate from pyridoxamine 5'-phosphate: step 1/1. It functions in the pathway cofactor metabolism; pyridoxal 5'-phosphate salvage; pyridoxal 5'-phosphate from pyridoxine 5'-phosphate: step 1/1. Its function is as follows. Catalyzes the oxidation of either pyridoxine 5'-phosphate (PNP) or pyridoxamine 5'-phosphate (PMP) into pyridoxal 5'-phosphate (PLP). The chain is Pyridoxine/pyridoxamine 5'-phosphate oxidase from Anaplasma phagocytophilum (strain HZ).